The chain runs to 355 residues: Syntaxin-5 (355 aa).

Topologically, residues 1–333 (MIPRKRYGSK…KYFQSVTSNR (333 aa)) are cytoplasmic. A compositionally biased stretch (polar residues) spans 28–37 (PATAGSSSSD). The segment at 28–47 (PATAGSSSSDIAPLPPPVAL) is disordered. The IxM motif; signal for cargo packaging into COPII-coated vesicles signature appears at 245-247 (IDM). The t-SNARE coiled-coil homology domain occupies 263–325 (DSYIQSRADT…EAAHSEILKY (63 aa)). Positions 287–318 (FQQLAHMVKEQEETIQRIDENVLGAQLDVEAA) form a coiled coil. Residues 334-354 (WLMVKIFLILIVFFIIFVVFL) traverse the membrane as a helical; Anchor for type IV membrane protein segment. A topological domain (vesicular) is located at residue Ala355.

The protein belongs to the syntaxin family. Part of a ternary complex containing STX5A, NSFL1C and VCP. Part of a unique SNARE complex composed of the Golgi SNAREs GOSR1, GOSR2 and YKT6. This complex also includes VTI1A. Component of a SNARE complex consisting of STX5, YKT6, GOSR1 and BET1L. Interacts with BET1L. Interacts with BET1. Interacts with COG4. Interacts with GM130/GOLGA2. Interacts (via IxM motif) with SEC24C and SEC24D; mediates STX5 packaging into COPII-coated vesicles. Interacts with VLDLR; this interaction mediates VLDLR translocation from the endoplasmic reticulum to the plasma membrane.

It localises to the endoplasmic reticulum-Golgi intermediate compartment membrane. The protein resides in the golgi apparatus membrane. Functionally, mediates endoplasmic reticulum to Golgi transport. Together with p115/USO1 and GM130/GOLGA2, involved in vesicle tethering and fusion at the cis-Golgi membrane to maintain the stacked and inter-connected structure of the Golgi apparatus. The polypeptide is Syntaxin-5 (STX5) (Bos taurus (Bovine)).